Consider the following 303-residue polypeptide: Acetyltransferase ataH (303 aa).

A signal peptide spans 1–23 (MPTTAAFLRALYILTTLRGIGTS). A run of 3 helical transmembrane segments spans residues 42–62 (FLLHTLVIIAAKYLVLDMMTF), 194–214 (LVFAISSCLHLAIDGRAGIML), and 257–277 (GYIWTWAFLSLVAPMYNFPLF).

The protein belongs to the wax synthase family.

It is found in the membrane. Its pathway is mycotoxin biosynthesis. In terms of biological role, acetyltransferase; part of the gene cluster that mediates the biosynthesis of acetylaranotin, a member of the epipolythiodioxopiperazine (ETP) class of toxins characterized by a disulfide-bridged cyclic dipeptide. The first step of acetylaranotin biosynthesis is performed by the NRPS ataP which produces diketopiperazine cyclo-L-Phe-L-Phe via the condensation of 2 phenylalanines (L-Phe). The ataC domain of ataTC then catalyzes the formation of bishydroxylation of cyclo-L-Phe-L-Phe. The glutathione S-transferase domain ataG in ataIMG further catalyzes the conjugation of two glutathiones to the bishydroxylated intermediate. Next, the dipeptidase ataJ removes the Glu residues. The following step is performed by the carbon sulfur lyase domain ataI of ataIMG which may convert the bis-cysteinyl adduct to yield an epidithiol intermediate. The ataT domain from ataTC then catalyzes the oxidation of the free dithiols, followed by a cyclization step catalyzed by the cytochrome P450 ataF. AtaF probably acts as an epoxidase to promote a dual epoxidation formation at C8 and C9 along with C8' and C9', followed by the spontaneous nucleophilic attack of the amide nitrogens N10 and N10' to yield an intermediate with the pyrrolidine partial structure. The final steps of acetylaranotin biosynthesis involve the acetylation and ring rearrangement of an epitetrathiodiketopiperazine intermediate to produce acetylaranotin. AtaH probably catalyzes the acetylation of epitetrathiodiketopiperazine to produce a diacetate and ataY is responsible for the formation of the dihydrooxepin moiety that converts the diacetate intermediate to acetylaranotin via acetylapoaranotin. Both enzymes could function independently in the absence of the other. The acetylaranotin bis-thiomethyltransferase ataS located outside of acetylaranotin gene cluster is the main thiomethyltransferase responsible for converting acetylaranotin and its related intermediates to their methylated forms. The sequence is that of Acetyltransferase ataH from Aspergillus terreus (strain NIH 2624 / FGSC A1156).